Reading from the N-terminus, the 280-residue chain is Shikimate kinase (280 aa).

86-96 (PPGVGLKGSAA) provides a ligand contact to ATP.

Belongs to the GHMP kinase family. Archaeal shikimate kinase subfamily.

The protein localises to the cytoplasm. The catalysed reaction is shikimate + ATP = 3-phosphoshikimate + ADP + H(+). Its pathway is metabolic intermediate biosynthesis; chorismate biosynthesis; chorismate from D-erythrose 4-phosphate and phosphoenolpyruvate: step 5/7. The protein is Shikimate kinase (aroK) of Aeropyrum pernix (strain ATCC 700893 / DSM 11879 / JCM 9820 / NBRC 100138 / K1).